We begin with the raw amino-acid sequence, 280 residues long: Movement protein (280 aa).

The segment at 248–267 is disordered; it reads ESEELNVESPPAAIGSSSAS. A compositionally biased stretch (low complexity) spans 255–267; that stretch reads ESPPAAIGSSSAS.

It belongs to the cucumovirus movement protein family.

The protein localises to the host cell junction. Its subcellular location is the host plasmodesma. Its function is as follows. Transports viral genome to neighboring plant cells directly through plasmosdesmata, without any budding. The movement protein allows efficient cell to cell propagation, by bypassing the host cell wall barrier. Acts by forming a tubular structure at the host plasmodesmata, enlarging it enough to allow free passage of virion capsids. The polypeptide is Movement protein (Cucumis sativus (Cucumber)).